We begin with the raw amino-acid sequence, 261 residues long: Putative [LysW]-aminoadipate/[LysW]-glutamate kinase (261 aa).

Substrate-binding positions include glycine 35–glycine 36, arginine 62, and asparagine 162.

This sequence belongs to the acetylglutamate kinase family. LysZ subfamily.

The protein resides in the cytoplasm. The catalysed reaction is [amino-group carrier protein]-C-terminal-N-(1,4-dicarboxybutan-1-yl)-L-glutamine + ATP = [amino-group carrier protein]-C-terminal-N-(1-carboxy-5-phosphooxy-5-oxopentan-1-yl)-L-glutamine + ADP. It carries out the reaction [amino-group carrier protein]-C-terminal-gamma-(L-glutamyl)-L-glutamate + ATP = [amino-group carrier protein]-C-terminal-gamma-(5-phospho-L-glutamyl)-L-glutamate + ADP. It participates in amino-acid biosynthesis; L-lysine biosynthesis via AAA pathway; L-lysine from L-alpha-aminoadipate (Thermus route): step 2/5. Its pathway is amino-acid biosynthesis; L-arginine biosynthesis. Its function is as follows. Involved in both the arginine and lysine biosynthetic pathways. Phosphorylates the LysW-bound precursors glutamate (for arginine biosynthesis), respectively alpha-aminoadipate (for lysine biosynthesis). In Pyrobaculum aerophilum (strain ATCC 51768 / DSM 7523 / JCM 9630 / CIP 104966 / NBRC 100827 / IM2), this protein is Putative [LysW]-aminoadipate/[LysW]-glutamate kinase.